The chain runs to 206 residues: Cytochrome c oxidase subunit 3 (206 aa).

The next 5 membrane-spanning stretches (helical) occupy residues 26–46 (FLGF…FFGT), 68–88 (LVFI…LAMF), 97–117 (AMMI…GFEI), 143–163 (LVGL…VLLI), and 185–205 (WHFI…MGVG).

Belongs to the cytochrome c oxidase subunit 3 family.

The protein localises to the cell membrane. It catalyses the reaction 4 Fe(II)-[cytochrome c] + O2 + 8 H(+)(in) = 4 Fe(III)-[cytochrome c] + 2 H2O + 4 H(+)(out). The sequence is that of Cytochrome c oxidase subunit 3 (ctaE) from Alkalihalophilus pseudofirmus (strain ATCC BAA-2126 / JCM 17055 / OF4) (Bacillus pseudofirmus).